The primary structure comprises 438 residues: Enolase (438 aa).

Position 163 (glutamine 163) interacts with (2R)-2-phosphoglycerate. Glutamate 205 serves as the catalytic Proton donor. Positions 243, 292, and 319 each coordinate Mg(2+). Residues lysine 344, arginine 373, serine 374, and lysine 395 each coordinate (2R)-2-phosphoglycerate. Lysine 344 acts as the Proton acceptor in catalysis.

It belongs to the enolase family. It depends on Mg(2+) as a cofactor.

It localises to the cytoplasm. The protein resides in the secreted. It is found in the cell surface. It carries out the reaction (2R)-2-phosphoglycerate = phosphoenolpyruvate + H2O. It participates in carbohydrate degradation; glycolysis; pyruvate from D-glyceraldehyde 3-phosphate: step 4/5. Its function is as follows. Catalyzes the reversible conversion of 2-phosphoglycerate (2-PG) into phosphoenolpyruvate (PEP). It is essential for the degradation of carbohydrates via glycolysis. The polypeptide is Enolase (Streptococcus agalactiae).